Consider the following 126-residue polypeptide: Histone H2B.5 (126 aa).

The span at 1–27 shows a compositional bias: basic and acidic residues; the sequence is MAPKAEKKPSEKAPKADKKITKEGGSE. The disordered stretch occupies residues 1-34; it reads MAPKAEKKPSEKAPKADKKITKEGGSERKKKTKK. A N,N,N-trimethylalanine; alternate modification is found at Ala2. Ala2 is subject to N,N-dimethylalanine; alternate. Ala2 is modified (N-methylalanine; alternate). At Lys4 the chain carries N6-methyllysine. N6-acetyllysine occurs at positions 7, 12, 18, and 19. A Glycyl lysine isopeptide (Lys-Gly) (interchain with G-Cter in ubiquitin) cross-link involves residue Lys122.

This sequence belongs to the histone H2B family. As to quaternary structure, the nucleosome is a histone octamer containing two molecules each of H2A, H2B, H3 and H4 assembled in one H3-H4 heterotetramer and two H2A-H2B heterodimers. The octamer wraps approximately 147 bp of DNA. Can be acetylated to form H2BK6ac, H2BK33ac and H2BK34ac. Post-translationally, monoubiquitinated by BRE1 to form H2BK143ub1 and deubiquitinated by UBP26. Required for heterochromatic histone H3 di- and trimethylation at H3K4me. May give a specific tag for epigenetic transcriptional activation.

Its subcellular location is the nucleus. It localises to the chromosome. Functionally, core component of nucleosome. Nucleosomes wrap and compact DNA into chromatin, limiting DNA accessibility to the cellular machineries which require DNA as a template. Histones thereby play a central role in transcription regulation, DNA repair, DNA replication and chromosomal stability. DNA accessibility is regulated via a complex set of post-translational modifications of histones, also called histone code, and nucleosome remodeling. The protein is Histone H2B.5 of Arabidopsis thaliana (Mouse-ear cress).